A 197-amino-acid chain; its full sequence is V-type ATP synthase subunit E 2 (197 aa).

Belongs to the V-ATPase E subunit family.

In terms of biological role, produces ATP from ADP in the presence of a proton gradient across the membrane. The polypeptide is V-type ATP synthase subunit E 2 (Clostridium tetani (strain Massachusetts / E88)).